We begin with the raw amino-acid sequence, 548 residues long: Sulochrin halogenase gedL (548 aa).

The FAD site is built by Gly14, Ala17, and Glu47. Ser333 and Gly334 together coordinate chloride. Position 335 (Val335) interacts with FAD.

The protein belongs to the flavin-dependent halogenase family.

The catalysed reaction is sulochrin + 2 FADH2 + 2 chloride + 2 O2 = dihydrogeodin + 2 FAD + 4 H2O + H(+). Its pathway is secondary metabolite biosynthesis. Its function is as follows. Sulochrin halogenase; part of the gene cluster that mediates the biosynthesis of geodin, an intermediate in the biosynthesis of other natural products. The pathway begins with the synthesis of atrochrysone thioester by the polyketide synthase (PKS) gedC. The atrochrysone carboxyl ACP thioesterase gedB then breaks the thioester bond and releases the atrochrysone carboxylic acid from gedC. The atrochrysone carboxylic acid is then converted to atrochrysone which is further transformed into emodinanthrone. The next step is performed by the emodinanthrone oxygenase gedH that catalyzes the oxidation of emodinanthrone to emodin. Emodin O-methyltransferase encoded probably by gedA then catalyzes methylation of the 8-hydroxy group of emodin to form questin. Ring cleavage of questin by questin oxidase gedK leads to desmethylsulochrin via several intermediates including questin epoxide. Another methylation step probably catalyzed by methyltransferase gedG leads to the formation of sulochrin which is further converted to dihydrogeodin by the sulochrin halogenase gedL. Finally, the dihydrogeodin oxidase gedJ catalyzes the stereospecific phenol oxidative coupling reaction converting dihydrogeodin to geodin. The sequence is that of Sulochrin halogenase gedL from Aspergillus terreus (strain NIH 2624 / FGSC A1156).